The sequence spans 522 residues: Cytochrome P450 monooxygenase AKT7 (522 aa).

Residues 10–30 (LYVTCTVLAALILGYIQAMII) traverse the membrane as a helical segment. Cys-452 is a heme binding site.

This sequence belongs to the cytochrome P450 family. Heme serves as cofactor.

Its subcellular location is the membrane. The protein operates within mycotoxin biosynthesis. Cytochrome P450 monooxygenase; part of the gene clusters that mediate the biosynthesis of the host-selective toxins (HSTs) AK-toxins responsible for Japanese pear black spot disease by the Japanese pear pathotype. AK-toxins are esters of 9,10-epoxy 8-hydroxy 9-methyldecatrienoic acid (EDA). On cellular level, AK-toxins affect plasma membrane of susceptible cells and cause a sudden increase in loss of K(+) after a few minutes of toxin treatment. The acyl-CoA ligase AKT1, the hydrolase AKT2 and enoyl-CoA hydratase AKT3 are all involved in the biosynthesis of the AK-, AF- and ACT-toxin common 9,10-epoxy-8-hydroxy-9-methyl-decatrienoic acid (EDA) structural moiety. Part of the EDA biosynthesis occurs in the peroxisome since these 3 enzymes are localized in peroxisomes. The exact roles of the 3 enzymes, as well as of additional AK-toxin clusters enzymes, including AKT4, AKT6 and AKTS1, have still to be elucidated. The Cytochrome P450 monooxygenase AKT7 on the other side functions to limit production of EDA and AK-toxin, probably via the catalysis of a side reaction of EDA or its precursor. The chain is Cytochrome P450 monooxygenase AKT7 from Alternaria alternata (Alternaria rot fungus).